The following is a 315-amino-acid chain: Calumenin (315 aa).

Positions 1 to 19 (MNKRPLLLCLGLWVACTLS) are cleaved as a signal peptide. 6 consecutive EF-hand domains span residues 68–103 (ESKE…AQKK), 104–139 (YVYD…TYLD), 151–186 (QMMI…EEFD), 188–223 (MKDI…HDGD), 229–264 (WVKT…SDYD), and 265–300 (HSEA…FVGS). Residues Asp81, Asp83, Asp85, Tyr87, Glu92, Asp117, Ser119, Asp121, and Glu128 each contribute to the Ca(2+) site. Asn131 is a glycosylation site (N-linked (GlcNAc...) asparagine). Positions 164, 166, 168, 175, 201, 203, 205, 212, 242, 244, 246, 248, 253, 278, 280, 282, 284, and 289 each coordinate Ca(2+). Residues 312–315 (HDEF) carry the Prevents secretion from ER motif.

Belongs to the CREC family. In terms of assembly, interacts with ggcx.

The protein resides in the endoplasmic reticulum membrane. It is found in the golgi apparatus. It localises to the secreted. The protein localises to the melanosome. Its subcellular location is the sarcoplasmic reticulum lumen. In terms of biological role, involved in regulation of vitamin K-dependent carboxylation of multiple N-terminal glutamate residues. Seems to inhibit gamma-carboxylase ggcx. Binds 7 calcium ions with a low affinity. The sequence is that of Calumenin (calu) from Xenopus laevis (African clawed frog).